We begin with the raw amino-acid sequence, 102 residues long: UPF0045 protein Mb1933 (102 aa).

The protein belongs to the UPF0045 family.

The chain is UPF0045 protein Mb1933 from Mycobacterium bovis (strain ATCC BAA-935 / AF2122/97).